The primary structure comprises 247 residues: tRNA uridine(34) hydroxylase (247 aa).

A Rhodanese domain is found at 123-217 (ITKQDVIVDT…YLEDTQNKNN (95 aa)). C177 serves as the catalytic Cysteine persulfide intermediate.

The protein belongs to the TrhO family.

The catalysed reaction is uridine(34) in tRNA + AH2 + O2 = 5-hydroxyuridine(34) in tRNA + A + H2O. Functionally, catalyzes oxygen-dependent 5-hydroxyuridine (ho5U) modification at position 34 in tRNAs. The sequence is that of tRNA uridine(34) hydroxylase from Rickettsia bellii (strain RML369-C).